The sequence spans 181 residues: Peptidyl-tRNA hydrolase (181 aa).

Tyr-14 contributes to the tRNA binding site. His-19 functions as the Proton acceptor in the catalytic mechanism. TRNA-binding residues include Tyr-62, Asn-64, and Asn-108.

Belongs to the PTH family. In terms of assembly, monomer.

It is found in the cytoplasm. It carries out the reaction an N-acyl-L-alpha-aminoacyl-tRNA + H2O = an N-acyl-L-amino acid + a tRNA + H(+). Its function is as follows. Hydrolyzes ribosome-free peptidyl-tRNAs (with 1 or more amino acids incorporated), which drop off the ribosome during protein synthesis, or as a result of ribosome stalling. Catalyzes the release of premature peptidyl moieties from peptidyl-tRNA molecules trapped in stalled 50S ribosomal subunits, and thus maintains levels of free tRNAs and 50S ribosomes. This is Peptidyl-tRNA hydrolase from Campylobacter jejuni (strain RM1221).